Reading from the N-terminus, the 402-residue chain is Phosphoglycerate kinase (402 aa).

Substrate contacts are provided by residues 24-26 (DFN), R40, 63-66 (HFGR), R122, and R155. ATP is bound by residues K206, G297, E328, and 358 to 361 (GGDS).

It belongs to the phosphoglycerate kinase family. As to quaternary structure, monomer.

It localises to the cytoplasm. The enzyme catalyses (2R)-3-phosphoglycerate + ATP = (2R)-3-phospho-glyceroyl phosphate + ADP. The protein operates within carbohydrate degradation; glycolysis; pyruvate from D-glyceraldehyde 3-phosphate: step 2/5. This is Phosphoglycerate kinase from Prochlorococcus marinus (strain MIT 9515).